Here is a 114-residue protein sequence, read N- to C-terminus: MTTKIERRVKIKYRVRNKISGTAERPRMSVFRSNKQIYVQIIDDLSGKTLAAASSLGMAEKVAKKEQAAKVGEMIAKKAQEAGITTVVFDRNGYLYHGRVKEVADAARNGGLKF.

It belongs to the universal ribosomal protein uL18 family. In terms of assembly, part of the 50S ribosomal subunit; part of the 5S rRNA/L5/L18/L25 subcomplex. Contacts the 5S and 23S rRNAs.

Its function is as follows. This is one of the proteins that bind and probably mediate the attachment of the 5S RNA into the large ribosomal subunit, where it forms part of the central protuberance. The sequence is that of Large ribosomal subunit protein uL18 from Bacteroides thetaiotaomicron (strain ATCC 29148 / DSM 2079 / JCM 5827 / CCUG 10774 / NCTC 10582 / VPI-5482 / E50).